The following is a 264-amino-acid chain: [LysW]-aminoadipate/[LysW]-glutamate kinase (264 aa).

Residues 35–36 (GG), arginine 62, and asparagine 167 contribute to the substrate site.

The protein belongs to the acetylglutamate kinase family. LysZ subfamily.

Its subcellular location is the cytoplasm. It carries out the reaction [amino-group carrier protein]-C-terminal-N-(1,4-dicarboxybutan-1-yl)-L-glutamine + ATP = [amino-group carrier protein]-C-terminal-N-(1-carboxy-5-phosphooxy-5-oxopentan-1-yl)-L-glutamine + ADP. It catalyses the reaction [amino-group carrier protein]-C-terminal-gamma-(L-glutamyl)-L-glutamate + ATP = [amino-group carrier protein]-C-terminal-gamma-(5-phospho-L-glutamyl)-L-glutamate + ADP. It functions in the pathway amino-acid biosynthesis; L-lysine biosynthesis via AAA pathway; L-lysine from L-alpha-aminoadipate (Thermus route): step 2/5. The protein operates within amino-acid biosynthesis; L-arginine biosynthesis. In terms of biological role, involved in both the arginine and lysine biosynthetic pathways. Phosphorylates the LysW-bound precursors glutamate (for arginine biosynthesis), respectively alpha-aminoadipate (for lysine biosynthesis). The sequence is that of [LysW]-aminoadipate/[LysW]-glutamate kinase from Saccharolobus solfataricus (strain ATCC 35092 / DSM 1617 / JCM 11322 / P2) (Sulfolobus solfataricus).